Here is a 462-residue protein sequence, read N- to C-terminus: uncharacterized protein (462 aa).

Positions 12–70 (MLKKNDIIQVAISDLSHEGAGVAKHDGFVFFVDNALPEEVIDMRVLKVNKNSGFGKVEA) constitute a TRAM domain. S-adenosyl-L-methionine-binding residues include Gln-294, Tyr-323, Glu-344, and Asp-392. The active-site Nucleophile is the Cys-419.

It belongs to the class I-like SAM-binding methyltransferase superfamily. RNA M5U methyltransferase family.

This is an uncharacterized protein from Streptococcus pyogenes serotype M3 (strain ATCC BAA-595 / MGAS315).